The following is a 286-amino-acid chain: Shikimate dehydrogenase (NADP(+)) (286 aa).

Shikimate is bound by residues 21 to 23 (TLS) and Thr-68. Lys-72 functions as the Proton acceptor in the catalytic mechanism. Residue Asp-84 coordinates NADP(+). Positions 93 and 108 each coordinate shikimate. NADP(+) contacts are provided by residues 132 to 136 (GYGGA) and Leu-226. Tyr-228 contributes to the shikimate binding site. Residue Gly-249 participates in NADP(+) binding.

It belongs to the shikimate dehydrogenase family. In terms of assembly, homodimer.

It catalyses the reaction shikimate + NADP(+) = 3-dehydroshikimate + NADPH + H(+). It functions in the pathway metabolic intermediate biosynthesis; chorismate biosynthesis; chorismate from D-erythrose 4-phosphate and phosphoenolpyruvate: step 4/7. Involved in the biosynthesis of the chorismate, which leads to the biosynthesis of aromatic amino acids. Catalyzes the reversible NADPH linked reduction of 3-dehydroshikimate (DHSA) to yield shikimate (SA). The polypeptide is Shikimate dehydrogenase (NADP(+)) (Thermosynechococcus vestitus (strain NIES-2133 / IAM M-273 / BP-1)).